A 132-amino-acid polypeptide reads, in one-letter code: Agouti-signaling protein (132 aa).

The signal sequence occupies residues 1-22; that stretch reads MDVTRLLLATLLVFLCFFTANS. The N-linked (GlcNAc...) asparagine glycan is linked to Asn-39. A disordered region spans residues 61–87; that stretch reads QIGRKEAEKKRSSKKEASMKKVARPRT. Over residues 63-79 the composition is skewed to basic and acidic residues; the sequence is GRKEAEKKRSSKKEASM. Disulfide bonds link Cys-93–Cys-108, Cys-100–Cys-114, Cys-107–Cys-125, Cys-111–Cys-132, and Cys-116–Cys-123. In terms of domain architecture, Agouti spans 93 to 132; the sequence is CVATRNSCKPPAPACCDPCASCQCRFFRSACSCRVLSLNC.

It is found in the secreted. Involved in the regulation of melanogenesis. The binding of ASP to MC1R precludes alpha-MSH initiated signaling and thus blocks production of cAMP, leading to a down-regulation of eumelanogenesis (brown/black pigment) and thus increasing synthesis of pheomelanin (yellow/red pigment). The polypeptide is Agouti-signaling protein (ASIP) (Gorilla gorilla gorilla (Western lowland gorilla)).